The following is a 107-amino-acid chain: Period circadian protein (107 aa).

The tract at residues 81 to 107 (ITNGSNTGTGTSSGSFQPPLLTEALLN) is disordered. The segment covering 82-95 (TNGSNTGTGTSSGS) has biased composition (low complexity).

In terms of assembly, forms a heterodimer with timeless (TIM); the complex then translocates into the nucleus. Phosphorylated with a circadian rhythmicity, probably by the double-time protein (dbt). Phosphorylation could be implicated in the stability of per monomer and in the formation of heterodimer per-tim.

It localises to the nucleus. The protein localises to the cytoplasm. It is found in the perinuclear region. In terms of biological role, essential for biological clock functions. Determines the period length of circadian and ultradian rhythms; an increase in PER dosage leads to shortened circadian rhythms and a decrease leads to lengthened circadian rhythms. Essential for the circadian rhythmicity of locomotor activity, eclosion behavior, and for the rhythmic component of the male courtship song that originates in the thoracic nervous system. The biological cycle depends on the rhythmic formation and nuclear localization of the TIM-PER complex. Light induces the degradation of TIM, which promotes elimination of PER. Nuclear activity of the heterodimer coordinatively regulates PER and TIM transcription through a negative feedback loop. Behaves as a negative element in circadian transcriptional loop. Does not appear to bind DNA, suggesting indirect transcriptional inhibition. In Beris vallata (Common orange legionnaire), this protein is Period circadian protein (per).